The sequence spans 184 residues: Photosystem I assembly protein Ycf4 (184 aa).

Helical transmembrane passes span 22-42 (FCWA…GTSS) and 57-77 (ILFF…LFIS).

This sequence belongs to the Ycf4 family.

It is found in the plastid. The protein resides in the chloroplast thylakoid membrane. In terms of biological role, seems to be required for the assembly of the photosystem I complex. This chain is Photosystem I assembly protein Ycf4, found in Liriodendron tulipifera (Tuliptree).